Reading from the N-terminus, the 435-residue chain is Hydrogenobyrinate a,c-diamide synthase (435 aa).

The GATase cobBQ-type domain occupies 247–435 (RIALARDAAF…TGSFFHLIAG (189 aa)). The active-site Nucleophile is Cys-329.

This sequence belongs to the CobB/CbiA family. Requires Mg(2+) as cofactor.

It carries out the reaction hydrogenobyrinate + 2 L-glutamine + 2 ATP + 2 H2O = hydrogenobyrinate a,c-diamide + 2 L-glutamate + 2 ADP + 2 phosphate + 2 H(+). It functions in the pathway cofactor biosynthesis; adenosylcobalamin biosynthesis; cob(II)yrinate a,c-diamide from precorrin-2 (aerobic route): step 9/10. In terms of biological role, catalyzes the ATP-dependent amidation of the two carboxylate groups at positions a and c of hydrogenobyrinate, using either L-glutamine or ammonia as the nitrogen source. The chain is Hydrogenobyrinate a,c-diamide synthase from Rhodobacter capsulatus (strain ATCC BAA-309 / NBRC 16581 / SB1003).